The primary structure comprises 271 residues: 3-methyl-2-oxobutanoate hydroxymethyltransferase (271 aa).

Asp52 and Asp91 together coordinate Mg(2+). Residues 52-53, Asp91, and Lys121 contribute to the 3-methyl-2-oxobutanoate site; that span reads DS. Mg(2+) is bound at residue Glu123. The Proton acceptor role is filled by Glu189.

The protein belongs to the PanB family. In terms of assembly, homodecamer; pentamer of dimers. Mg(2+) serves as cofactor.

It localises to the cytoplasm. It carries out the reaction 3-methyl-2-oxobutanoate + (6R)-5,10-methylene-5,6,7,8-tetrahydrofolate + H2O = 2-dehydropantoate + (6S)-5,6,7,8-tetrahydrofolate. Its pathway is cofactor biosynthesis; (R)-pantothenate biosynthesis; (R)-pantoate from 3-methyl-2-oxobutanoate: step 1/2. Catalyzes the reversible reaction in which hydroxymethyl group from 5,10-methylenetetrahydrofolate is transferred onto alpha-ketoisovalerate to form ketopantoate. This chain is 3-methyl-2-oxobutanoate hydroxymethyltransferase, found in Acidothermus cellulolyticus (strain ATCC 43068 / DSM 8971 / 11B).